Reading from the N-terminus, the 118-residue chain is MRHCAFLFRLFLIGYSCSVYFSACTQASSLKEPADELPRAEQWDSDGKRILQADDPEHIPTEERGITQNLSPAVESVGKVKASKMAVPKSVISKLNPVNWVKGTWAALKKGFKALQLG.

Positions 1–18 (MRHCAFLFRLFLIGYSCS) are cleaved as a signal peptide. A compositionally biased stretch (basic and acidic residues) spans 35-65 (DELPRAEQWDSDGKRILQADDPEHIPTEERG). The disordered stretch occupies residues 35–66 (DELPRAEQWDSDGKRILQADDPEHIPTEERGI). Residues 49-64 (RILQADDPEHIPTEER) carry the RxLR-dEER motif.

Belongs to the RxLR effector family.

It localises to the secreted. It is found in the host cell membrane. Functionally, secreted effector that completely suppresses the host cell death induced by cell death-inducing proteins. The chain is Secreted RxLR effector protein 143 from Plasmopara viticola (Downy mildew of grapevine).